A 270-amino-acid polypeptide reads, in one-letter code: tRNA pseudouridine synthase A (270 aa).

Asp60 functions as the Nucleophile in the catalytic mechanism. Residues 107-111 (FHARF) form an RNA binding region. Tyr118 provides a ligand contact to substrate. The tract at residues 168–172 (QCQSR) is interaction with tRNA.

It belongs to the tRNA pseudouridine synthase TruA family. In terms of assembly, homodimer.

The enzyme catalyses uridine(38/39/40) in tRNA = pseudouridine(38/39/40) in tRNA. In terms of biological role, formation of pseudouridine at positions 38, 39 and 40 in the anticodon stem and loop of transfer RNAs. This chain is tRNA pseudouridine synthase A, found in Shigella boydii serotype 4 (strain Sb227).